The following is a 189-amino-acid chain: Dual specificity phosphatase 29 (189 aa).

One can recognise a Tyrosine-protein phosphatase domain in the interval 33–182; the sequence is HVNEVWPGVY…LRELDTHLQE (150 aa). 126 to 133 is a binding site for substrate; it reads HCVMGRSR. The active-site Phosphocysteine intermediate is cysteine 127.

The protein belongs to the protein-tyrosine phosphatase family. Non-receptor class dual specificity subfamily.

The protein localises to the cytoplasm. The protein resides in the nucleus. The enzyme catalyses O-phospho-L-tyrosyl-[protein] + H2O = L-tyrosyl-[protein] + phosphate. It carries out the reaction O-phospho-L-seryl-[protein] + H2O = L-seryl-[protein] + phosphate. The catalysed reaction is O-phospho-L-threonyl-[protein] + H2O = L-threonyl-[protein] + phosphate. Functionally, dual specificity phosphatase able to dephosphorylate phosphotyrosine, phosphoserine and phosphothreonine residues within the same substrate, with a preference for phosphotyrosine as a substrate. Involved in the modulation of AMPK and MAPK1/2 signaling pathways. The polypeptide is Dual specificity phosphatase 29 (dusp29) (Danio rerio (Zebrafish)).